The primary structure comprises 296 residues: uncharacterized protein (296 aa).

An N-terminal signal peptide occupies residues 1 to 20 (MKKALGILAILLILVGGYFA).

This is an uncharacterized protein from Aquifex aeolicus (strain VF5).